Reading from the N-terminus, the 221-residue chain is Adenylate kinase (221 aa).

10–15 (GAGKGT) lines the ATP pocket. Positions 30–59 (STGDMLRAAVKAGTPLGVEAKKVMDAGGLV) are NMP. Residues threonine 31, arginine 36, 57–59 (GLV), 85–88 (GFPR), and glutamine 92 contribute to the AMP site. Residues 122–159 (GRRVHVASGRTYHLKYNPPKTEGVDDETGEPLIQRDDD) are LID. ATP contacts are provided by residues arginine 123 and 132–133 (TY). The disordered stretch occupies residues 138–159 (NPPKTEGVDDETGEPLIQRDDD). AMP-binding residues include arginine 156 and arginine 167. Glycine 207 contributes to the ATP binding site.

This sequence belongs to the adenylate kinase family. As to quaternary structure, monomer.

It is found in the cytoplasm. It catalyses the reaction AMP + ATP = 2 ADP. The protein operates within purine metabolism; AMP biosynthesis via salvage pathway; AMP from ADP: step 1/1. Its function is as follows. Catalyzes the reversible transfer of the terminal phosphate group between ATP and AMP. Plays an important role in cellular energy homeostasis and in adenine nucleotide metabolism. This Cupriavidus taiwanensis (strain DSM 17343 / BCRC 17206 / CCUG 44338 / CIP 107171 / LMG 19424 / R1) (Ralstonia taiwanensis (strain LMG 19424)) protein is Adenylate kinase.